A 374-amino-acid polypeptide reads, in one-letter code: Alanine racemase (374 aa).

Lys40 functions as the Proton acceptor; specific for D-alanine in the catalytic mechanism. Lys40 carries the post-translational modification N6-(pyridoxal phosphate)lysine. Residue Arg136 participates in substrate binding. Tyr264 functions as the Proton acceptor; specific for L-alanine in the catalytic mechanism. Met311 serves as a coordination point for substrate.

This sequence belongs to the alanine racemase family. The cofactor is pyridoxal 5'-phosphate.

It carries out the reaction L-alanine = D-alanine. Its pathway is amino-acid biosynthesis; D-alanine biosynthesis; D-alanine from L-alanine: step 1/1. Functionally, catalyzes the interconversion of L-alanine and D-alanine. May also act on other amino acids. This Pediococcus pentosaceus (strain ATCC 25745 / CCUG 21536 / LMG 10740 / 183-1w) protein is Alanine racemase (alr).